Here is a 616-residue protein sequence, read N- to C-terminus: Protein translocase subunit SecD (616 aa).

The next 6 membrane-spanning stretches (helical) occupy residues 11–31 (LMVI…IYGE), 453–473 (QGIN…LFYY), 475–495 (MFGV…VGLM), 497–517 (ILPG…TLGM), 547–569 (YNGA…IILY), and 585–605 (LGVA…VNAL).

Belongs to the SecD/SecF family. SecD subfamily. In terms of assembly, forms a complex with SecF. Part of the essential Sec protein translocation apparatus which comprises SecA, SecYEG and auxiliary proteins SecDF-YajC and YidC.

It localises to the cell inner membrane. Its function is as follows. Part of the Sec protein translocase complex. Interacts with the SecYEG preprotein conducting channel. SecDF uses the proton motive force (PMF) to complete protein translocation after the ATP-dependent function of SecA. In Haemophilus influenzae (strain ATCC 51907 / DSM 11121 / KW20 / Rd), this protein is Protein translocase subunit SecD.